We begin with the raw amino-acid sequence, 218 residues long: Phosphoglycolate phosphatase (218 aa).

Residue Asp7 is the Nucleophile of the active site. Mg(2+) contacts are provided by Asp7, Asp9, and Asp167.

This sequence belongs to the HAD-like hydrolase superfamily. CbbY/CbbZ/Gph/YieH family. The cofactor is Mg(2+).

The catalysed reaction is 2-phosphoglycolate + H2O = glycolate + phosphate. Its pathway is organic acid metabolism; glycolate biosynthesis; glycolate from 2-phosphoglycolate: step 1/1. Functionally, specifically catalyzes the dephosphorylation of 2-phosphoglycolate. Is involved in the dissimilation of the intracellular 2-phosphoglycolate formed during the DNA repair of 3'-phosphoglycolate ends, a major class of DNA lesions induced by oxidative stress. The protein is Phosphoglycolate phosphatase of Cereibacter sphaeroides (Rhodobacter sphaeroides).